The primary structure comprises 227 residues: Sperm-associated antigen 7 (227 aa).

The disordered stretch occupies residues 1–45 (MADLLGSILSSMEKPPSLGDQESRRKAREQAARLKKLQEQDKQQK). Residue alanine 2 is modified to N-acetylalanine. The span at 21–45 (QESRRKAREQAARLKKLQEQDKQQK) shows a compositional bias: basic and acidic residues. Residues 35 to 51 (KKLQEQDKQQKVEFRKR) carry the Nuclear localization signal motif. The R3H domain occupies 46 to 109 (VEFRKRMEKE…DCRYVMIFKK (64 aa)). At serine 114 the chain carries Phosphoserine. The segment at 118–161 (LDSYRHGEEWDPQKAEEKRKLKELAQKQEEEAAQQGPAVVSPAS) is disordered. Residues 119–147 (DSYRHGEEWDPQKAEEKRKLKELAQKQEE) show a composition bias toward basic and acidic residues. Residues 122–139 (RHGEEWDPQKAEEKRKLK) carry the Nuclear localization signal motif. 2 positions are modified to phosphoserine: serine 158 and serine 202.

It is found in the nucleus. The sequence is that of Sperm-associated antigen 7 (Spag7) from Mus musculus (Mouse).